Here is an 83-residue protein sequence, read N- to C-terminus: Small ribosomal subunit protein uS17 (83 aa).

This sequence belongs to the universal ribosomal protein uS17 family. As to quaternary structure, part of the 30S ribosomal subunit.

Functionally, one of the primary rRNA binding proteins, it binds specifically to the 5'-end of 16S ribosomal RNA. This chain is Small ribosomal subunit protein uS17, found in Thermodesulfovibrio yellowstonii (strain ATCC 51303 / DSM 11347 / YP87).